The chain runs to 305 residues: Glycerol-3-phosphate dehydrogenase [NAD(P)+] (305 aa).

3 residues coordinate NADPH: W11, R31, and K79. Residues K79 and G107 each contribute to the sn-glycerol 3-phosphate site. An NADPH-binding site is contributed by A111. 5 residues coordinate sn-glycerol 3-phosphate: K162, D215, S225, R226, and N227. The active-site Proton acceptor is the K162. R226 provides a ligand contact to NADPH. E252 provides a ligand contact to NADPH.

Belongs to the NAD-dependent glycerol-3-phosphate dehydrogenase family.

It is found in the cytoplasm. The enzyme catalyses sn-glycerol 3-phosphate + NAD(+) = dihydroxyacetone phosphate + NADH + H(+). It carries out the reaction sn-glycerol 3-phosphate + NADP(+) = dihydroxyacetone phosphate + NADPH + H(+). It participates in membrane lipid metabolism; glycerophospholipid metabolism. Its function is as follows. Catalyzes the reduction of the glycolytic intermediate dihydroxyacetone phosphate (DHAP) to sn-glycerol 3-phosphate (G3P), the key precursor for phospholipid synthesis. The sequence is that of Glycerol-3-phosphate dehydrogenase [NAD(P)+] from Gloeobacter violaceus (strain ATCC 29082 / PCC 7421).